The sequence spans 301 residues: Glutamyl-Q tRNA(Asp) synthetase (301 aa).

Residues 8-12 and E44 contribute to the L-glutamate site; that span reads RFAPS. The 'HIGH' region motif lies at 11–21; the sequence is PSPTGPLHFGS. Positions 100, 102, 122, and 126 each coordinate Zn(2+). L-glutamate-binding residues include Y180 and R198. A 'KMSKS' region motif is present at residues 236 to 240; it reads KLSKQ. K239 lines the ATP pocket.

This sequence belongs to the class-I aminoacyl-tRNA synthetase family. GluQ subfamily. Zn(2+) serves as cofactor.

In terms of biological role, catalyzes the tRNA-independent activation of glutamate in presence of ATP and the subsequent transfer of glutamate onto a tRNA(Asp). Glutamate is transferred on the 2-amino-5-(4,5-dihydroxy-2-cyclopenten-1-yl) moiety of the queuosine in the wobble position of the QUC anticodon. The chain is Glutamyl-Q tRNA(Asp) synthetase from Dechloromonas aromatica (strain RCB).